Here is a 362-residue protein sequence, read N- to C-terminus: DNA replication and repair protein RecF (362 aa).

30–37 (GDNGAGKT) provides a ligand contact to ATP.

Belongs to the RecF family.

Its subcellular location is the cytoplasm. Its function is as follows. The RecF protein is involved in DNA metabolism; it is required for DNA replication and normal SOS inducibility. RecF binds preferentially to single-stranded, linear DNA. It also seems to bind ATP. In Xanthomonas oryzae pv. oryzae (strain MAFF 311018), this protein is DNA replication and repair protein RecF.